A 238-amino-acid chain; its full sequence is Ribosomal RNA small subunit methyltransferase G (238 aa).

Residues G77, F82, 128–129, and R147 each bind S-adenosyl-L-methionine; that span reads AE. Residues 219–238 form a disordered region; it reads RQTPKKYPRKAGLPNKEPIE.

It belongs to the methyltransferase superfamily. RNA methyltransferase RsmG family.

The protein localises to the cytoplasm. Its function is as follows. Specifically methylates the N7 position of guanine in position 535 of 16S rRNA. This Oceanobacillus iheyensis (strain DSM 14371 / CIP 107618 / JCM 11309 / KCTC 3954 / HTE831) protein is Ribosomal RNA small subunit methyltransferase G.